The sequence spans 196 residues: MSSQIDAVILAGGMARRMGGDDKGLVELNGEAMIKHTIDRIKPQVKEILINANRNQTRYAEFGFKVISDEHTGFLGPLAGMITAMGQTDADYLLVVPCDCPLLPTDLVPRMLAAIKAEDAEIAVASDGEYEQPVVLLLKPSLRDSMKAFLEAGERKVDFWYAKHHFVVESFSDQPNAFVNVNTPEQKQRLAMEITK.

GTP is bound by residues 10–12, lysine 23, asparagine 51, aspartate 69, and aspartate 99; that span reads LAG. Aspartate 99 is a binding site for Mg(2+).

Belongs to the MobA family. As to quaternary structure, monomer. Mg(2+) serves as cofactor.

The protein resides in the cytoplasm. The enzyme catalyses Mo-molybdopterin + GTP + H(+) = Mo-molybdopterin guanine dinucleotide + diphosphate. Functionally, transfers a GMP moiety from GTP to Mo-molybdopterin (Mo-MPT) cofactor (Moco or molybdenum cofactor) to form Mo-molybdopterin guanine dinucleotide (Mo-MGD) cofactor. This Shewanella baltica (strain OS155 / ATCC BAA-1091) protein is Molybdenum cofactor guanylyltransferase.